The following is a 103-amino-acid chain: Large ribosomal subunit protein bL21 (103 aa).

Belongs to the bacterial ribosomal protein bL21 family. As to quaternary structure, part of the 50S ribosomal subunit. Contacts protein L20.

Functionally, this protein binds to 23S rRNA in the presence of protein L20. In Clostridium botulinum (strain Alaska E43 / Type E3), this protein is Large ribosomal subunit protein bL21.